Here is a 292-residue protein sequence, read N- to C-terminus: Ribonuclease T2-like (292 aa).

A signal peptide spans 1–23; that stretch reads MAKTASAMLFLYLLLSRCLLSHA. Intrachain disulfides connect C42–C61, C50–C103, C60–C177, C111–C169, and C246–C280. An N-linked (GlcNAc...) asparagine glycan is attached at N52. Active-site residues include H96, E162, and H166.

The protein belongs to the RNase T2 family.

The protein localises to the vacuole lumen. The protein resides in the cytoplasm. The catalysed reaction is a ribonucleotidyl-ribonucleotide-RNA + H2O = a 3'-end 3'-phospho-ribonucleotide-RNA + a 5'-end dephospho-ribonucleoside-RNA + H(+). In terms of biological role, rnase which modulates cell survival under stress conditions. Released from the vacuole to the cytoplasm during stress to promote tRNA and rRNA cleavage and to activate separately a downstream pathway that promotes cell death. Involved in cell size, vacuolar morphology and growth at high temperatures and high salt concentration. This chain is Ribonuclease T2-like (RNY1), found in Eremothecium gossypii (strain ATCC 10895 / CBS 109.51 / FGSC 9923 / NRRL Y-1056) (Yeast).